The primary structure comprises 922 residues: Lacticin 481/lactococcin biosynthesis protein LcnDR2 (922 aa).

In terms of biological role, could be implicated in the processing or the export process of the lantibiotic lacticin 481/lactococcin DR. This chain is Lacticin 481/lactococcin biosynthesis protein LcnDR2 (lcnDR2), found in Lactococcus lactis subsp. lactis (Streptococcus lactis).